We begin with the raw amino-acid sequence, 337 residues long: DNA-directed RNA polymerase subunit alpha (337 aa).

The interval 1–233 (MVREEVVGST…DLFIPFLHAE (233 aa)) is alpha N-terminal domain (alpha-NTD). Residues 265–337 (KEIALKCIFI…FAIDLPKNKF (73 aa)) form an alpha C-terminal domain (alpha-CTD) region.

This sequence belongs to the RNA polymerase alpha chain family. In terms of assembly, in plastids the minimal PEP RNA polymerase catalytic core is composed of four subunits: alpha, beta, beta', and beta''. When a (nuclear-encoded) sigma factor is associated with the core the holoenzyme is formed, which can initiate transcription.

Its subcellular location is the plastid. The protein resides in the chloroplast. It carries out the reaction RNA(n) + a ribonucleoside 5'-triphosphate = RNA(n+1) + diphosphate. DNA-dependent RNA polymerase catalyzes the transcription of DNA into RNA using the four ribonucleoside triphosphates as substrates. The chain is DNA-directed RNA polymerase subunit alpha from Acorus gramineus (Dwarf sweet flag).